The primary structure comprises 287 residues: 33 kDa chaperonin (287 aa).

Cystine bridges form between Cys231–Cys233 and Cys264–Cys267.

The protein belongs to the HSP33 family. Post-translationally, under oxidizing conditions two disulfide bonds are formed involving the reactive cysteines. Under reducing conditions zinc is bound to the reactive cysteines and the protein is inactive.

It localises to the cytoplasm. Redox regulated molecular chaperone. Protects both thermally unfolding and oxidatively damaged proteins from irreversible aggregation. Plays an important role in the bacterial defense system toward oxidative stress. This is 33 kDa chaperonin from Thermosipho melanesiensis (strain DSM 12029 / CIP 104789 / BI429).